Consider the following 96-residue polypeptide: Putative defensin-like protein 236 (96 aa).

Positions 1–23 (MKNATSLIIYCFLMFLLMNNVKG) are cleaved as a signal peptide. Cystine bridges form between C31/C93, C41/C70, C49/C83, and C68/C85.

Belongs to the DEFL family.

The protein localises to the secreted. In Arabidopsis thaliana (Mouse-ear cress), this protein is Putative defensin-like protein 236 (SCRL20).